The sequence spans 383 residues: Acetylornithine deacetylase (383 aa).

Histidine 80 provides a ligand contact to Zn(2+). Residue aspartate 82 is part of the active site. Aspartate 112 contributes to the Zn(2+) binding site. Glutamate 144 is a catalytic residue. Positions 145, 169, and 355 each coordinate Zn(2+).

Belongs to the peptidase M20A family. ArgE subfamily. In terms of assembly, homodimer. Zn(2+) is required as a cofactor. The cofactor is Co(2+). It depends on glutathione as a cofactor.

It localises to the cytoplasm. The catalysed reaction is N(2)-acetyl-L-ornithine + H2O = L-ornithine + acetate. The protein operates within amino-acid biosynthesis; L-arginine biosynthesis; L-ornithine from N(2)-acetyl-L-ornithine (linear): step 1/1. Its function is as follows. Catalyzes the hydrolysis of the amide bond of N(2)-acetylated L-amino acids. Cleaves the acetyl group from N-acetyl-L-ornithine to form L-ornithine, an intermediate in L-arginine biosynthesis pathway, and a branchpoint in the synthesis of polyamines. This chain is Acetylornithine deacetylase, found in Shigella flexneri.